Here is a 185-residue protein sequence, read N- to C-terminus: MINEIKNDAKDRMAKSVESLKTQMSKIRTGRAHPSLLDGIQVEYYGAATPLKQLANVVAEDARTLSISIFDRSMIQAVEKAILTSDLGLNPSSNGQTLRVPLPPLTEERRRDLTKIVRAEAEGARVAVRNIRRDANADLKALLKDKEISEDDDRRAQEEIQKLTDSFIKLVDDALAAKEKELMEI.

Belongs to the RRF family.

The protein localises to the cytoplasm. Functionally, responsible for the release of ribosomes from messenger RNA at the termination of protein biosynthesis. May increase the efficiency of translation by recycling ribosomes from one round of translation to another. This chain is Ribosome-recycling factor, found in Aeromonas salmonicida (strain A449).